The chain runs to 278 residues: Manganese import system permease protein ScaB (278 aa).

Helical transmembrane passes span 18 to 38 (ALIT…FIIL), 40 to 60 (GMSL…ALSF), 61 to 81 (ILGI…SILI), 136 to 156 (VTIG…RPLL), 172 to 192 (VKLY…TAMQ), 194 to 214 (VGTI…YLYA), 220 to 240 (MMLL…FIGY), and 244 to 264 (IAVG…SFFI).

The protein belongs to the ABC-3 integral membrane protein family.

Its subcellular location is the cell membrane. Functionally, part of an ABC transporter complex involved in manganese import. The protein is Manganese import system permease protein ScaB of Streptococcus pneumoniae.